We begin with the raw amino-acid sequence, 236 residues long: CBS domain-containing protein CBSX1, chloroplastic (236 aa).

The N-terminal 53 residues, methionine 1–proline 53, are a transit peptide targeting the chloroplast. The disordered stretch occupies residues proline 47 to asparagine 66. Serine 54 is modified (N-acetylserine). 2 CBS domains span residues methionine 81–glutamate 142 and methionine 175–serine 231.

It localises to the plastid. The protein resides in the chloroplast. In Arabidopsis thaliana (Mouse-ear cress), this protein is CBS domain-containing protein CBSX1, chloroplastic (CBSX1).